We begin with the raw amino-acid sequence, 373 residues long: Probable G-protein coupled receptor 173 (373 aa).

Over 1 to 26 (MANTTGEPEEVSGALSLPSASAYVKL) the chain is Extracellular. N-linked (GlcNAc...) asparagine glycosylation occurs at Asn-3. The helical transmembrane segment at 27–47 (VLLGLIMCVSLAGNAILSLLV) threads the bilayer. Residues 48-59 (LKERALHKAPYY) lie on the Cytoplasmic side of the membrane. The helical transmembrane segment at 60–80 (FLLDLCLADGIRSAICFPFVL) threads the bilayer. The Extracellular portion of the chain corresponds to 81-97 (ASVRHGSSWTFSALSCK). A disulfide bridge connects residues Cys-96 and Cys-174. The chain crosses the membrane as a helical span at residues 98 to 118 (IVAFMAVLFCFHAAFMLFCIS). Topologically, residues 119–139 (VTRYMAIAHHRFYAKRMTLWT) are cytoplasmic. Residues 140-160 (CAAVICMAWTLSVAMAFPPVF) form a helical membrane-spanning segment. At 161–188 (DVGTYKFIREEDQCIFEHRYFKANDTLG) the chain is on the extracellular side. Asn-184 carries N-linked (GlcNAc...) asparagine glycosylation. A helical membrane pass occupies residues 189-209 (FMLMLAVLMAATHAVYGKLLL). Over 210-287 (FEYRHRKMKP…VKGEKQLGRM (78 aa)) the chain is Cytoplasmic. The helical transmembrane segment at 288-308 (FYAITLLFLLLWSPYIVACYW) threads the bilayer. Residues 309–322 (RVFVKACAVPHRYL) lie on the Extracellular side of the membrane. A helical membrane pass occupies residues 323-343 (ATAVWMSFAQAAVNPIVCFLL). The Cytoplasmic segment spans residues 344-373 (NKDLKKCLRTHAPCWGTGGAPAPREPYCVM).

It belongs to the G-protein coupled receptor 1 family. As to expression, expressed in the ovary, specifically in granulosa cells of follicles that have passed the primary stage and in oocytes (at protein level). Expressed in preadipocytes.

The protein resides in the cell membrane. Its function is as follows. Is a receptor for the SMIM20 derived peptides Phoenixin-14 and Phoenixin-20. It mediates the Phoenixin-14 and Phoenixin-20 augmentation of gonadotropin-releasing hormone (GNRH) signaling in the hypothalamus and pituitary gland. In the ovary, it mediates the effects of Phoenixin-14 and Phoenixin-20 induced granulosa cell proliferation during follicular growth. This Mus musculus (Mouse) protein is Probable G-protein coupled receptor 173 (Gpr173).